The sequence spans 603 residues: Elongation factor 4 (603 aa).

A tr-type G domain is found at 7–191; sequence DNIRNFSIVA…AIVTRLPPPK (185 aa). GTP contacts are provided by residues 19 to 24 and 138 to 141; these read DHGKST and NKVD.

Belongs to the TRAFAC class translation factor GTPase superfamily. Classic translation factor GTPase family. LepA subfamily.

Its subcellular location is the cell inner membrane. The catalysed reaction is GTP + H2O = GDP + phosphate + H(+). Required for accurate and efficient protein synthesis under certain stress conditions. May act as a fidelity factor of the translation reaction, by catalyzing a one-codon backward translocation of tRNAs on improperly translocated ribosomes. Back-translocation proceeds from a post-translocation (POST) complex to a pre-translocation (PRE) complex, thus giving elongation factor G a second chance to translocate the tRNAs correctly. Binds to ribosomes in a GTP-dependent manner. This Rhodopseudomonas palustris (strain BisA53) protein is Elongation factor 4.